We begin with the raw amino-acid sequence, 242 residues long: Neuromodulin (242 aa).

The segment at 1–242 is disordered; the sequence is MLCCMRRTKQ…EEREADQEHA (242 aa). Residues cysteine 3 and cysteine 4 are each lipidated (S-palmitoyl cysteine). The span at 9–32 shows a compositional bias: basic and acidic residues; the sequence is KQVEKNDEDQKIEQDGIKPEDKAH. The IQ domain maps to 31–60; that stretch reads AHKAATKIQASFRGHITRKKLKGEKKGDAQ. A Phosphoserine; by PHK and PKC modification is found at serine 41. Composition is skewed to basic and acidic residues over residues 66 to 84 and 98 to 117; these read GNEK…KEGE and KAEE…KGEG. Over residues 142–157 the composition is skewed to polar residues; sequence ETESATKASTDNSPSS. 3 positions are modified to phosphoserine: serine 154, serine 156, and serine 157. Residues 158–170 show a composition bias toward basic and acidic residues; sequence KAEDAPAKEEPKQ. Low complexity predominate over residues 171-203; sequence ADVPAAVTAAAAATTPAAEDAAAKATAQPPTDA. Threonine 185 is modified (phosphothreonine). Phosphoserine; by CK2 is present on residues serine 206 and serine 207. The span at 209–242 shows a compositional bias: basic and acidic residues; the sequence is AEEKIEAVDETKPKESARQDEGKGEEREADQEHA.

This sequence belongs to the neuromodulin family. Identified in a complex containing FGFR4, NCAM1, CDH2, PLCG1, FRS2, SRC, SHC1, GAP43 and CTTN. Interacts (via IQ domain) with calmodulin. Binds calmodulin with a greater affinity in the absence of Ca(2+) than in its presence. In terms of processing, phosphorylated. Phosphorylation of this protein by a protein kinase C is specifically correlated with certain forms of synaptic plasticity. Palmitoylated by ZDHHC3. Palmitoylation is regulated by ARF6 and is essential for plasma membrane association and axonal and dendritic filopodia induction. Deacylated by LYPLA2.

It localises to the cell membrane. The protein resides in the cell projection. The protein localises to the growth cone membrane. It is found in the synapse. Its subcellular location is the filopodium membrane. It localises to the perikaryon. The protein resides in the dendrite. The protein localises to the axon. It is found in the cytoplasm. Its function is as follows. This protein is associated with nerve growth. It is a major component of the motile 'growth cones' that form the tips of elongating axons. Plays a role in axonal and dendritic filopodia induction. In Felis catus (Cat), this protein is Neuromodulin (GAP43).